The primary structure comprises 595 residues: 2-succinyl-5-enolpyruvyl-6-hydroxy-3-cyclohexene-1-carboxylate synthase (595 aa).

It belongs to the TPP enzyme family. MenD subfamily. In terms of assembly, homodimer. It depends on Mg(2+) as a cofactor. Mn(2+) is required as a cofactor. Requires thiamine diphosphate as cofactor.

It carries out the reaction isochorismate + 2-oxoglutarate + H(+) = 5-enolpyruvoyl-6-hydroxy-2-succinyl-cyclohex-3-ene-1-carboxylate + CO2. It functions in the pathway quinol/quinone metabolism; 1,4-dihydroxy-2-naphthoate biosynthesis; 1,4-dihydroxy-2-naphthoate from chorismate: step 2/7. It participates in cofactor biosynthesis; phylloquinone biosynthesis. Functionally, catalyzes the thiamine diphosphate-dependent decarboxylation of 2-oxoglutarate and the subsequent addition of the resulting succinic semialdehyde-thiamine pyrophosphate anion to isochorismate to yield 2-succinyl-5-enolpyruvyl-6-hydroxy-3-cyclohexene-1-carboxylate (SEPHCHC). The polypeptide is 2-succinyl-5-enolpyruvyl-6-hydroxy-3-cyclohexene-1-carboxylate synthase (Synechocystis sp. (strain ATCC 27184 / PCC 6803 / Kazusa)).